A 1065-amino-acid polypeptide reads, in one-letter code: Exportin-T (1065 aa).

Belongs to the exportin family.

It localises to the nucleus. The protein resides in the cytoplasm. In terms of biological role, tRNA nucleus export receptor which facilitates tRNA translocation across the nuclear pore complex. Involved in pre-tRNA splicing, probably by affecting the interaction of pre-tRNA with splicing endonuclease. The sequence is that of Exportin-T (LOS1) from Coprinopsis cinerea (strain Okayama-7 / 130 / ATCC MYA-4618 / FGSC 9003) (Inky cap fungus).